The following is a 685-amino-acid chain: Multicopper oxidase VdtB (685 aa).

An N-terminal signal peptide occupies residues 1–17 (MPAYLLLLACNVLLVLG). Plastocyanin-like domains lie at 26–139 (LTWE…IRRK) and 168–368 (IMML…RYKN). An N-linked (GlcNAc...) asparagine glycan is attached at Asn-71. Positions 75, 77, 119, and 121 each coordinate Cu cation. N-linked (GlcNAc...) asparagine glycans are attached at residues Asn-178, Asn-229, Asn-253, Asn-432, and Asn-475. The Plastocyanin-like 3 domain maps to 466-585 (DDDLIIRTQN…DNGMAMAILD (120 aa)). His-500 contributes to the Cu cation binding site. N-linked (GlcNAc...) asparagine glycosylation is present at Asn-517. A helical membrane pass occupies residues 627 to 647 (SLVWAGGAAVVLLSLFIGGLW).

The protein belongs to the multicopper oxidase family.

The protein localises to the membrane. It catalyses the reaction 4 semiviriditoxin + O2 = 2 (M)-viriditoxin + 2 H2O. Its pathway is secondary metabolite biosynthesis. Multicopper oxidase; part of the gene cluster that mediates the biosynthesis of viriditoxin, one of the 'classical' secondary metabolites produced by fungi and that has antibacterial activity. The first step is performed by the polyketide synthase VdtA which condenses one acetyl-CoA and 6 malonyl-CoA units to form the heptaketide monomer backbone of viriditoxin. The product of VdtA is then O-methylated on C7 by the O-methyltransferase VdtC. The O-methyl group is important for the stereoselective coupling of the monomers at the final step of viriditoxin biosynthesis. The short-chain dehydrogenase/reductase VdtF then acts as a stereospecific reductase converting the pyrone to dihydropyrone via the reduction of the C3-C4 double bond. The FAD-binding monooxygenase VdtE then converts the ketone group into a methyl-ester group to yield semi-viriditoxin. Finally, the laccase VdtB is involved in dimerization of 2 semi-viriditoxin molecules to yield the final viriditoxin. VdtB is responsible for the regioselective 6,6'-coupling of semi-viriditoxin, which yields (M)-viriditoxin and (P)-viriditoxin at a ratio of 1:2. The non-catalytic carboxylesterase-like protein VdtD affects the stereochemistical outcome of the coupling. The highly reducing polyketide synthase VdtX is not involved in viriditoxin synthesis, but might possibly play a role in the production of additional metabolites not identified yet. The protein is Multicopper oxidase VdtB of Byssochlamys spectabilis (Paecilomyces variotii).